We begin with the raw amino-acid sequence, 792 residues long: Probable exo-1,4-beta-xylosidase xlnD (792 aa).

The N-terminal stretch at 1-20 (MSAIKSIATVLAAILPSVLA) is a signal peptide. N-linked (GlcNAc...) asparagine glycans are attached at residues N23, N87, N142, and N246. The active site involves D310. 10 N-linked (GlcNAc...) asparagine glycosylation sites follow: N326, N385, N391, N404, N438, N475, N479, N516, N677, and N699.

The protein belongs to the glycosyl hydrolase 3 family.

It localises to the secreted. The catalysed reaction is Hydrolysis of (1-&gt;4)-beta-D-xylans, to remove successive D-xylose residues from the non-reducing termini.. It participates in glycan degradation; xylan degradation. In terms of biological role, xylan 1,4-beta-xylosidase involved in the hydrolysis of xylan, a major structural heterogeneous polysaccharide found in plant biomass representing the second most abundant polysaccharide in the biosphere, after cellulose. The sequence is that of Probable exo-1,4-beta-xylosidase xlnD (xlnD) from Aspergillus clavatus (strain ATCC 1007 / CBS 513.65 / DSM 816 / NCTC 3887 / NRRL 1 / QM 1276 / 107).